A 771-amino-acid polypeptide reads, in one-letter code: DNA helicase/primase complex-associated protein (771 aa).

The protein belongs to the herpesviridae HEPA family. In terms of assembly, associates with the primase and the helicase to form the helicase-primase complex. Interacts with the origin-binding protein. Interacts with the polymerase catalytic subunit.

It is found in the host nucleus. Functionally, component of the helicase/primase complex. Unwinds the DNA at the replication forks and generates single-stranded DNA for both leading and lagging strand synthesis. The primase synthesizes short RNA primers on the lagging strand that the polymerase presumably elongates using dNTPs. The primase-associated factor has no known catalytic activity in the complex and may serve to facilitate the formation of the replisome by directly interacting with the origin-binding protein and the polymerase. This is DNA helicase/primase complex-associated protein from Varicella-zoster virus (strain Oka vaccine) (HHV-3).